The following is a 230-amino-acid chain: Ion-translocating oxidoreductase complex subunit E (230 aa).

5 consecutive transmembrane segments (helical) span residues 39–59 (LGLG…VSLI), 69–89 (IPVF…LMNA), 93–113 (GLYL…IIIG), 125–145 (LPAA…LVVL), and 182–202 (SFLL…LIAL).

The protein belongs to the NqrDE/RnfAE family. In terms of assembly, the complex is composed of six subunits: RnfA, RnfB, RnfC, RnfD, RnfE and RnfG.

It is found in the cell inner membrane. In terms of biological role, part of a membrane-bound complex that couples electron transfer with translocation of ions across the membrane. The sequence is that of Ion-translocating oxidoreductase complex subunit E from Vibrio vulnificus (strain YJ016).